Consider the following 355-residue polypeptide: MEKQRLKAQLSSLRVPLFSVPWPGQCSNKAEVIEARMMKWADEHNLLVTDEYRNRVIRTRYGLLAARCYPNAGEVLLQAIADYLVWFFLADDLFVDRVEVATDETIRNLTAMVDVLDLNVAGSPPVFGELAWLDVCQRLRRLLQAEAFERFAQGMRLWATTAALQILNHLRPTPVGIREYQTIRRHTSGLNPCTSLADAANKGSVQACEFYDADVQTLVRQTNNIVCWANDIQSLRIEIHQPGQFRNMVTIYAQQGQSLQDAVETTATRVNKEIAGFCELADAVTARPISDELHGLIDGLEYWIRGYLDWVVHDTMRYADQFIESDADDRRFSAPDLSLLKKNCSSVTESTSSLV.

Residues Asp91 and Asp96 each coordinate Mg(2+). The short motif at 91–96 (DDLFVD) is the DDXXXD motif element. Arg184 provides a ligand contact to substrate. Residues Asn230, Ser234, and Glu238 each coordinate Mg(2+).

This sequence belongs to the terpene synthase family. Mg(2+) is required as a cofactor.

It catalyses the reaction (2E,6E)-farnesyl diphosphate + H2O = (+)-corvol ether B + diphosphate. The enzyme catalyses (2E,6E)-farnesyl diphosphate + H2O = (+)-corvol ether A + diphosphate. Functionally, terpene synthase that catalyzes the conversion of (2E,6E)-farnesyl diphosphate (FPP) into sesquiterpenes which are important for fungi-environment interactions. Produces a mixture consisting of 8 sesquiterpenes including corvol ethers A and B, as well as traces of epizonarene, gamma-cadinene, delta-cadinene, alpha-cadinene, alpha-cadinol, and an unidentified sesquiterpene. The major product is corvol ether A. The sequence is that of Sesquiterpene synthase MAJ_08936 from Metarhizium majus (strain ARSEF 297).